A 943-amino-acid polypeptide reads, in one-letter code: MAENKDVSQVLNTTPDQVVINRAPPTGLAPLRHSQLSDSGAESCYEGDEQARLIRSSSSRAHKFIIIPATPGTPPGSGAVAGPLPFRQTSSTTSLAAMAAALHKQSPLRHTSVRTRPSSEVLQPGQVLANQPTAAVSTSTVTFTIDDCNEEGDAIPAAASVPAPVTMPAISPTPATLTCTTTTTMAGDSVAVSPLSMELKSRLGSHHSSMRSVVSGYLPGLSDSSGNLVGGVSMATSGLQAPNPLYMQPQASLSGSSYHFHELAGNQIYSDVTSVRSLASIGIGSTDGRKLVIRRVPTTANELFDMVNPQTPPPLGVDDDDSYLDMSDETAQLKPRQQHWANKMQFVLACIGYSVGLGNVWRFPYMCYKSGGGVFLVPYCIILFICSIPLLFMELSVGQYTGRGPIGALGQLCPLFKGAGLASVVVSFLMSTYYSVIIGYSIYYFFTSFKTEMPWIDCNNRWNTPDCWVPQRKGINASAPDTSRTPSEEFFENKVLQISGGLEYPGMMRWELFACLICAWLMVYFATWKSIKSSAKVRYFTATFPFVLIIILMVRAVTLDGAAEGLRFFFRPKWSELKNANVWINAASQNFNSLGITFGSMISFASYNKYNNNILRDTVAVSAVNMITSLLVGIFAFSTLGNLALEQNTNVRDVIGDGPGMIFVVYPQAMAKMPYAQLWAVMFFFMLLCLGLNSQFAIVEVVVTSIQDGFPRWIKRHLGYHEIVVLFVCVISCLFGMPNIIQGGIYYFQLMDHYAASVTIMFLAFCQMIAIAWFYGTGRLSKNVKQMTGKAPSFYLRSCWLVLGPCLLFAIWVLSLINYHEPTYHNGRYTYPDWAYGIGWMFASFSLICIPGYAVINFLRSSGDTFWERIRNTLRPNIYECKICGEHHCEHDYPEQEQFMLAQEMATVYKPTNPHLLNLGQKCGYNAMQASPSHAEAGGPCGQ.

The Cytoplasmic portion of the chain corresponds to 1 to 345; it reads MAENKDVSQV…RQQHWANKMQ (345 aa). Positions 103–122 are disordered; it reads HKQSPLRHTSVRTRPSSEVL. 3 consecutive transmembrane segments (helical) span residues 346 to 366, 373 to 393, and 418 to 438; these read FVLA…FPYM, GVFL…LLFM, and GAGL…SVII. Residues 439–510 are Extracellular-facing; it reads GYSIYYFFTS…GLEYPGMMRW (72 aa). The N-linked (GlcNAc...) asparagine glycan is linked to N476. The next 9 membrane-spanning stretches (helical) occupy residues 511–531, 539–559, 591–607, 618–638, 679–699, 723–743, 754–774, 799–819, and 836–856; these read ELFA…WKSI, YFTA…AVTL, FNSL…FASY, TVAV…FAFS, WAVM…FAIV, IVVL…IIQG, YAAS…IAWF, CWLV…LINY, and YGIG…YAVI. The Cytoplasmic segment spans residues 857–943; it reads NFLRSSGDTF…HAEAGGPCGQ (87 aa).

This sequence belongs to the sodium:neurotransmitter symporter (SNF) (TC 2.A.22) family. In terms of tissue distribution, expressed both maternally and zygotically. Developing embryos exhibit expression in the posterior hindgut, foregut, midgut, Malpighian tubules, anal plate, Garland cells, and a subset of cells in the central nervous system. Central nervous system expression is seen in segmentally repeating in cells flanking the midline of the ventral ganglion. Isoform A and isoform B are colocalized in both the nervous system and the fluid reabsorption system.

It is found in the membrane. Plays a role in neuronal membrane excitation, important for normal response properties of the photoreceptor. Able to control excitability from either neurons or glia cells. Ine negatively regulates neuronal sodium channels. Controls neurotransmitter-mediated signaling pathways associated with the structure of the larval peripheral nerve, ine and eag control perineurial glial growth through partially redundant pathways. Isoform A and isoform B are both functional, although isoform A functions with greater efficiency. Has a role in osmolyte transport within the Malpighian tubule and hindgut. This is Sodium- and chloride-dependent GABA transporter ine from Drosophila melanogaster (Fruit fly).